A 127-amino-acid polypeptide reads, in one-letter code: MPTFKQLLKKPRKIVLTKSKSIALIQCPQKKGICMKVYTTSPKKPNSAERKVAKVNLTNGKSIIGYISGEGHTLQEHSLVLVRGGRVKDLPGVQYHFVRGVYDLHAVGTRKKSRSKYGKKLFKAPIV.

This sequence belongs to the universal ribosomal protein uS12 family.

The protein resides in the mitochondrion. Protein S12 is involved in the translation initiation step. The polypeptide is Small ribosomal subunit protein uS12m (RPS12) (Chondrus crispus (Carrageen Irish moss)).